The following is a 107-amino-acid chain: U1-lycotoxin-Ls1b (107 aa).

The first 20 residues, 1–20, serve as a signal peptide directing secretion; sequence MMKVLVVVALLVTHISYSSS. A propeptide spanning residues 21 to 41 is cleaved from the precursor; sequence EGIDDLEADELLSLMANEQTR. 4 cysteine pairs are disulfide-bonded: Cys44–Cys59, Cys51–Cys68, Cys58–Cys86, and Cys70–Cys84.

It belongs to the neurotoxin 19 (CSTX) family. 04 (U1-Lctx) subfamily. Expressed by the venom gland.

It localises to the secreted. This Lycosa singoriensis (Wolf spider) protein is U1-lycotoxin-Ls1b.